Reading from the N-terminus, the 236-residue chain is Flagellar L-ring protein (236 aa).

An N-terminal signal peptide occupies residues 1–16; the sequence is MRMQLTAVLAASLLAG. The N-palmitoyl cysteine moiety is linked to residue C17. C17 carries the S-diacylglycerol cysteine lipid modification.

It belongs to the FlgH family. As to quaternary structure, the basal body constitutes a major portion of the flagellar organelle and consists of four rings (L,P,S, and M) mounted on a central rod.

The protein localises to the cell outer membrane. It is found in the bacterial flagellum basal body. Its function is as follows. Assembles around the rod to form the L-ring and probably protects the motor/basal body from shearing forces during rotation. In Sinorhizobium fredii (strain NBRC 101917 / NGR234), this protein is Flagellar L-ring protein.